Here is a 139-residue protein sequence, read N- to C-terminus: Large ribosomal subunit protein uL16 (139 aa).

Belongs to the universal ribosomal protein uL16 family. As to quaternary structure, part of the 50S ribosomal subunit.

Its function is as follows. Binds 23S rRNA and is also seen to make contacts with the A and possibly P site tRNAs. The chain is Large ribosomal subunit protein uL16 from Treponema pallidum (strain Nichols).